Reading from the N-terminus, the 200-residue chain is Ras-related protein Rab-10 (200 aa).

Serine 18, glycine 19, valine 20, glycine 21, lysine 22, threonine 23, cysteine 24, asparagine 35, threonine 36, serine 40, and threonine 41 together coordinate GTP. Threonine 23 lines the Mg(2+) pocket. 2 consecutive short sequence motifs (switch) follow at residues 32-46 (DAFNTTFISTIGIDF) and 64-81 (DTAGQERFHTITTSYYRG). Mg(2+)-binding residues include threonine 41 and aspartate 64. Residue glycine 67 coordinates GTP. At threonine 73 the chain carries Phosphothreonine; by LRRK2. Lysine 102 carries the N6-acetyllysine modification. Lysine 102 is covalently cross-linked (Glycyl lysine isopeptide (Lys-Gly) (interchain with G-Cter in ubiquitin)). Residues asparagine 122, lysine 123, aspartate 125, and methionine 126 each coordinate GTP. Lysine 136 participates in a covalent cross-link: Glycyl lysine isopeptide (Lys-Gly) (interchain with G-Cter in ubiquitin). Residues serine 152, alanine 153, and lysine 154 each coordinate GTP. Residue lysine 154 forms a Glycyl lysine isopeptide (Lys-Gly) (interchain with G-Cter in ubiquitin) linkage. S-geranylgeranyl cysteine attachment occurs at residues cysteine 199 and cysteine 200.

This sequence belongs to the small GTPase superfamily. Rab family. In terms of assembly, interacts with MYO5A; mediates the transport to the plasma membrane of SLC2A4/GLUT4 storage vesicles. Interacts with GDI1 and with GDI2; negatively regulates RAB10 association with membranes and activation. Interacts (GDP-bound form) with LLGL1; the interaction is direct and promotes RAB10 association with membranes and activation through competition with the Rab inhibitor GDI1. Interacts with EXOC4; probably associates with the exocyst. Interacts (GTP-bound form) with MICALCL, MICAL1, MICAL3, EHBP1 and EHBP1L1; at least in case of MICAL1 two molecules of RAB10 can bind to one molecule of MICAL1. Interacts with TBC1D13. Interacts with SEC16A. Interacts with CHM and CHML. Interacts with LRRK2; interaction facilitates phosphorylation of Thr-73. Interacts (when phosphorylated on Thr-73) with RILPL1 and RILPL2. Interacts with TBC1D21. Interacts with MARCKS. Mg(2+) serves as cofactor. Ubiquitinated upon Legionella pneumophila infection. Ubiquitination does not lead to proteasomal degradation. In terms of processing, phosphorylation of Thr-73 in the switch II region by LRRK2 prevents the association of dRAB regulatory proteins, including CHM, CHML and RAB GDP dissociation inhibitors GDI1 and GDI2. Phosphorylation of Thr-73 by LRRK2 is stimulated by RAB29 and RAB32. Phosphorylation by LRRK2 is required for localization to stressed lysosomes. In terms of tissue distribution, expressed in the hippocampus. Expressed in neutrophils (at protein level). Expressed in the testis (at protein level).

The protein resides in the cytoplasmic vesicle membrane. Its subcellular location is the golgi apparatus membrane. The protein localises to the golgi apparatus. It is found in the trans-Golgi network membrane. It localises to the endosome membrane. The protein resides in the recycling endosome membrane. Its subcellular location is the cytoplasmic vesicle. The protein localises to the phagosome membrane. It is found in the cytoplasm. It localises to the cytoskeleton. The protein resides in the cilium basal body. Its subcellular location is the endoplasmic reticulum membrane. The protein localises to the perinuclear region. It is found in the lysosome. The catalysed reaction is GTP + H2O = GDP + phosphate + H(+). With respect to regulation, regulated by guanine nucleotide exchange factors (GEFs) DENND4C and RABIF which promote the exchange of bound GDP for free GTP. Regulated by GTPase activating proteins (GAPs) including TBC1D21 which increase the GTP hydrolysis activity. Inhibited by GDP dissociation inhibitors GDI1 and GDI2 which prevent Rab-GDP dissociation. Functionally, the small GTPases Rab are key regulators of intracellular membrane trafficking, from the formation of transport vesicles to their fusion with membranes. Rabs cycle between an inactive GDP-bound form and an active GTP-bound form that is able to recruit to membranes different set of downstream effectors directly responsible for vesicle formation, movement, tethering and fusion. That Rab is mainly involved in the biosynthetic transport of proteins from the Golgi to the plasma membrane. Regulates, for instance, SLC2A4/GLUT4 glucose transporter-enriched vesicles delivery to the plasma membrane. In parallel, it regulates the transport of TLR4, a toll-like receptor to the plasma membrane and therefore may be important for innate immune response. Also plays a specific role in asymmetric protein transport to the plasma membrane. In neurons, it is involved in axonogenesis through regulation of vesicular membrane trafficking toward the axonal plasma membrane. In epithelial cells, it regulates transport from the Golgi to the basolateral membrane. May play a role in the basolateral recycling pathway and in phagosome maturation. May play a role in endoplasmic reticulum dynamics and morphology controlling tubulation along microtubules and tubules fusion. Together with LRRK2, RAB8A, and RILPL1, it regulates ciliogenesis. When phosphorylated by LRRK2 on Thr-73, binds RILPL1 and inhibits ciliogenesis. Participates in the export of a subset of neosynthesized proteins through a Rab8-Rab10-Rab11-dependent endososomal export route. Targeted to and stabilized on stressed lysosomes through LRRK2 phosphorylation where it promotes the extracellular release of lysosomal content through EHBP1 and EHNP1L1 effector proteins. Its function is as follows. (Microbial infection) Upon Legionella pneumophila infection promotes endoplasmic reticulum recruitment and bacterial replication. Plays a role in remodeling the Legionella-containing vacuole (LCV) into an endoplasmic reticulum-like vacuole. The protein is Ras-related protein Rab-10 of Homo sapiens (Human).